Reading from the N-terminus, the 157-residue chain is SsrA-binding protein (157 aa).

It belongs to the SmpB family.

It is found in the cytoplasm. Required for rescue of stalled ribosomes mediated by trans-translation. Binds to transfer-messenger RNA (tmRNA), required for stable association of tmRNA with ribosomes. tmRNA and SmpB together mimic tRNA shape, replacing the anticodon stem-loop with SmpB. tmRNA is encoded by the ssrA gene; the 2 termini fold to resemble tRNA(Ala) and it encodes a 'tag peptide', a short internal open reading frame. During trans-translation Ala-aminoacylated tmRNA acts like a tRNA, entering the A-site of stalled ribosomes, displacing the stalled mRNA. The ribosome then switches to translate the ORF on the tmRNA; the nascent peptide is terminated with the 'tag peptide' encoded by the tmRNA and targeted for degradation. The ribosome is freed to recommence translation, which seems to be the essential function of trans-translation. This Methylobacterium nodulans (strain LMG 21967 / CNCM I-2342 / ORS 2060) protein is SsrA-binding protein.